The following is a 459-amino-acid chain: Lipase 4 (459 aa).

A signal peptide spans 1 to 14 (MLFLLFLLVAPIYA). An intrachain disulfide couples Cys-110 to Cys-281. The active-site Charge relay system is Ser-194. Asn-229 and Asn-266 each carry an N-linked (GlcNAc...) asparagine glycan. Residues Asp-343 and His-376 each act as charge relay system in the active site. A disulfide bridge links Cys-359 with Cys-404.

It belongs to the AB hydrolase superfamily. Lipase family. Class Lip subfamily.

It is found in the secreted. The enzyme catalyses a triacylglycerol + H2O = a diacylglycerol + a fatty acid + H(+). Its function is as follows. Secreted lipase that is able to hydrolyze both the neutral triacylglycerols and the monopalmitate ester Tween 40, allowing the use of hydrolyzed products as carbon sources. Has broad lipolytic activity, which may be important for colonization and subsequent infection, therefore contributing to the persistence and virulence in human tissue. The polypeptide is Lipase 4 (Candida albicans (strain SC5314 / ATCC MYA-2876) (Yeast)).